Here is a 167-residue protein sequence, read N- to C-terminus: Insertion element IS1 2 protein InsB (167 aa).

It belongs to the transposase 27 family.

Its function is as follows. Absolutely required for transposition of IS1. In Escherichia coli (strain K12), this protein is Insertion element IS1 2 protein InsB (insB2).